Reading from the N-terminus, the 554-residue chain is Phenylalanine--tRNA ligase beta subunit (554 aa).

The B5 domain occupies 276–351 (LTPKSRIISV…INYGYEKFDG (76 aa)). Positions 329, 335, 338, and 339 each coordinate Mg(2+).

It belongs to the phenylalanyl-tRNA synthetase beta subunit family. Type 2 subfamily. In terms of assembly, tetramer of two alpha and two beta subunits. Mg(2+) serves as cofactor.

The protein localises to the cytoplasm. The enzyme catalyses tRNA(Phe) + L-phenylalanine + ATP = L-phenylalanyl-tRNA(Phe) + AMP + diphosphate + H(+). This chain is Phenylalanine--tRNA ligase beta subunit, found in Methanococcus maripaludis (strain DSM 14266 / JCM 13030 / NBRC 101832 / S2 / LL).